A 399-amino-acid polypeptide reads, in one-letter code: Putative gustatory receptor 59e (399 aa).

The Cytoplasmic portion of the chain corresponds to 1-33 (MDSSYWENLLLTINRFLGVYPSGRVGVLRWLHT). The helical transmembrane segment at 34–54 (LWSLFLLMYIWTGSIVKCLEF) threads the bilayer. Topologically, residues 55 to 65 (TVEIPTIEKLL) are extracellular. Residues 66 to 86 (YLMEFPGNMATIAILVYYAVL) traverse the membrane as a helical segment. The Cytoplasmic portion of the chain corresponds to 87 to 120 (NRPLAHGAELQIERIITGLKGKAKRLVYKRHGQR). Residues 121–141 (TLHLMATTLVFHGLCVLVDVV) traverse the membrane as a helical segment. Residues 142–206 (NYDFEFWTTW…RPPQGSTKLD (65 aa)) are Extracellular-facing. The chain crosses the membrane as a helical span at residues 207 to 227 (ACYESAFAVLVDAGGGSALMI). The Cytoplasmic segment spans residues 228 to 250 (EEMRYTCNLIEQVHSQFLLRFGL). The helical transmembrane segment at 251-271 (YLVLNLLNSLVSICVELYLIF) threads the bilayer. The Extracellular portion of the chain corresponds to 272–282 (NFFETPLWEES). The chain crosses the membrane as a helical span at residues 283–303 (VLLVYRLLWLAMHGGRIWFIL). Topologically, residues 304-361 (SVNEQILEQKCNLCQLLNELEVCSSRLQRTINRFLLQLQRSIDQPLEACGIVTLDTRS) are cytoplasmic. A helical membrane pass occupies residues 362-382 (LGGFIGVLMAIVIFLIQIGLG). 2 N-linked (GlcNAc...) asparagine glycosylation sites follow: asparagine 383 and asparagine 392. The Extracellular portion of the chain corresponds to 383-399 (NKSLMGVALNRSNWVYV).

Belongs to the insect chemoreceptor superfamily. Gustatory receptor (GR) family. Gr10a subfamily. As to expression, expressed in the adult labellar chemosensory neurons. In larvae, is expressed in neurons of the terminal external chemosensory organ.

The protein localises to the cell membrane. Its function is as follows. Probable gustatory receptor which mediates acceptance or avoidance behavior, depending on its substrates. The polypeptide is Putative gustatory receptor 59e (Gr59e) (Drosophila melanogaster (Fruit fly)).